The following is a 380-amino-acid chain: Crotonobetainyl-CoA reductase (380 aa).

The protein belongs to the acyl-CoA dehydrogenase family. In terms of assembly, homotetramer. The cofactor is FAD.

Its subcellular location is the cytoplasm. The catalysed reaction is 4-(trimethylamino)butanoyl-CoA + oxidized [electron-transfer flavoprotein] + H(+) = crotonobetainyl-CoA + reduced [electron-transfer flavoprotein]. It functions in the pathway amine and polyamine metabolism; carnitine metabolism. Functionally, catalyzes the reduction of crotonobetainyl-CoA to gamma-butyrobetainyl-CoA. The protein is Crotonobetainyl-CoA reductase of Proteus sp. (strain LE138).